The following is a 1129-amino-acid chain: Ubiquitin carboxyl-terminal hydrolase 7 (1129 aa).

The tract at residues 1-20 is disordered; the sequence is MEIETDQSIEAMDTQDTQEV. The 122-residue stretch at 101-222 folds into the MATH domain; the sequence is ETTFSFTVEN…NNSITLEVHV (122 aa). The region spanning 241–548 is the USP domain; sequence VGLKNQGATC…NAYMLVYIRQ (308 aa). The active-site Nucleophile is the C250. Residue H490 is the Proton acceptor of the active site. Residue S1117 is modified to Phosphoserine.

It belongs to the peptidase C19 family.

Its subcellular location is the nucleus. The enzyme catalyses Thiol-dependent hydrolysis of ester, thioester, amide, peptide and isopeptide bonds formed by the C-terminal Gly of ubiquitin (a 76-residue protein attached to proteins as an intracellular targeting signal).. In terms of biological role, hydrolase that deubiquitinates target proteins. The polypeptide is Ubiquitin carboxyl-terminal hydrolase 7 (Usp7) (Drosophila melanogaster (Fruit fly)).